Reading from the N-terminus, the 93-residue chain is UPF0147 protein MM_1385 (93 aa).

The protein belongs to the UPF0147 family.

In Methanosarcina mazei (strain ATCC BAA-159 / DSM 3647 / Goe1 / Go1 / JCM 11833 / OCM 88) (Methanosarcina frisia), this protein is UPF0147 protein MM_1385.